The primary structure comprises 631 residues: Dolichyl-diphosphooligosaccharide--protein glycosyltransferase subunit 2 (631 aa).

The N-terminal stretch at 1–22 (MAPPGSSAVFLLALTITASTQA) is a signal peptide. The Lumenal segment spans residues 23 to 540 (LTPTHYLTKH…REPEKRPPTV (518 aa)). Asn-106 is a glycosylation site (N-linked (GlcNAc...) asparagine). A Glycyl lysine isopeptide (Lys-Gly) (interchain with G-Cter in ubiquitin) cross-link involves residue Lys-154. The helical transmembrane segment at 541-561 (VSNTFTALILSPLLLLFALWI) threads the bilayer. Residues 562–571 (RIGANVSNFT) lie on the Cytoplasmic side of the membrane. Residues 572 to 592 (FAPSTVIFHLGHAAMLGLMYV) form a helical membrane-spanning segment. The Lumenal portion of the chain corresponds to 593-596 (YWTQ). The helical transmembrane segment at 597 to 617 (LNMFQTLKYLAVLGTVTFLAG) threads the bilayer. Residues 618–631 (NRMLAQQAVKRTAH) are Cytoplasmic-facing.

The protein belongs to the SWP1 family. As to quaternary structure, component of the oligosaccharyltransferase (OST) complex. OST exists in two different complex forms which contain common core subunits RPN1, RPN2, OST48, OST4, DAD1 and TMEM258, either STT3A or STT3B as catalytic subunits, and form-specific accessory subunits. STT3A complex assembly occurs through the formation of 3 subcomplexes. Subcomplex 1 contains RPN1 and TMEM258, subcomplex 2 contains the STT3A-specific subunits STT3A, DC2/OSTC, and KCP2 as well as the core subunit OST4, and subcomplex 3 contains RPN2, DAD1, and OST48. The STT3A complex can form stable complexes with the Sec61 complex or with both the Sec61 and TRAP complexes. Interacts with DDI2. Interacts with TMEM35A/NACHO.

The protein localises to the endoplasmic reticulum. It is found in the endoplasmic reticulum membrane. Its pathway is protein modification; protein glycosylation. In terms of biological role, subunit of the oligosaccharyl transferase (OST) complex that catalyzes the initial transfer of a defined glycan (Glc(3)Man(9)GlcNAc(2) in eukaryotes) from the lipid carrier dolichol-pyrophosphate to an asparagine residue within an Asn-X-Ser/Thr consensus motif in nascent polypeptide chains, the first step in protein N-glycosylation. N-glycosylation occurs cotranslationally and the complex associates with the Sec61 complex at the channel-forming translocon complex that mediates protein translocation across the endoplasmic reticulum (ER). All subunits are required for a maximal enzyme activity. In Rattus norvegicus (Rat), this protein is Dolichyl-diphosphooligosaccharide--protein glycosyltransferase subunit 2.